The primary structure comprises 325 residues: MSEPEYRGNSFTGSRHALGINAPELAQYQDEPAQMRRRGVGKSGYLKLRFAKREHRSILAEMERRVPSMVQKALYWDEEMPELPCVTMISTSGCILQGDRLATDVIVEAGACAHVTTQSATKVHMMNANYASQIQNFTVEEGGYLEFMPDPLIPHRNSRFITDTTINIHPTATAIYSEVLMSGRKYHHADERFGFDVYSSRVAAHVFLGKEQPAGKELFVEKYVLEPKSESLDAIGVMQSFDAFGNVILLTPKEHHERILARVPAHFDIKGGIASGATRLPNDCGLVFKALGIDSAGVKNEIRQFWKIAREEILGVTLPEKFLWR.

This sequence belongs to the UreD family. UreD, UreF and UreG form a complex that acts as a GTP-hydrolysis-dependent molecular chaperone, activating the urease apoprotein by helping to assemble the nickel containing metallocenter of UreC. The UreE protein probably delivers the nickel.

It is found in the cytoplasm. In terms of biological role, required for maturation of urease via the functional incorporation of the urease nickel metallocenter. Its function is as follows. Expression of the urease operon increases the likelihood of bacterial survival by contributing to acid resistance in vitro and in vivo in BALB/c mice. Y.enterocolitica enters the body via an oral path and must survive the acidic stomach before being able to colonize the intestinal mucosa. This chain is Urease accessory protein UreD, found in Yersinia enterocolitica.